Here is a 227-residue protein sequence, read N- to C-terminus: 2,3-bisphosphoglycerate-dependent phosphoglycerate mutase (227 aa).

Substrate contacts are provided by residues Arg7 to Asn14, Thr20 to Gly21, Arg59, Glu86 to Tyr89, Lys97, Arg113 to Arg114, and Gly182 to Asn183. His8 serves as the catalytic Tele-phosphohistidine intermediate. Glu86 functions as the Proton donor/acceptor in the catalytic mechanism.

It belongs to the phosphoglycerate mutase family. BPG-dependent PGAM subfamily. As to quaternary structure, homodimer.

It carries out the reaction (2R)-2-phosphoglycerate = (2R)-3-phosphoglycerate. Its pathway is carbohydrate degradation; glycolysis; pyruvate from D-glyceraldehyde 3-phosphate: step 3/5. In terms of biological role, catalyzes the interconversion of 2-phosphoglycerate and 3-phosphoglycerate. This Pasteurella multocida (strain Pm70) protein is 2,3-bisphosphoglycerate-dependent phosphoglycerate mutase.